We begin with the raw amino-acid sequence, 401 residues long: 8-amino-7-oxononanoate synthase (401 aa).

Arg-19 contacts substrate. 106 to 107 (GY) is a pyridoxal 5'-phosphate binding site. Residue His-131 coordinates substrate. 3 residues coordinate pyridoxal 5'-phosphate: Ser-176, His-204, and Thr-233. Lys-236 carries the post-translational modification N6-(pyridoxal phosphate)lysine. Residue Thr-350 participates in substrate binding.

Belongs to the class-II pyridoxal-phosphate-dependent aminotransferase family. BioF subfamily. Homodimer. Pyridoxal 5'-phosphate is required as a cofactor.

It carries out the reaction 6-carboxyhexanoyl-[ACP] + L-alanine + H(+) = (8S)-8-amino-7-oxononanoate + holo-[ACP] + CO2. It participates in cofactor biosynthesis; biotin biosynthesis. Functionally, catalyzes the decarboxylative condensation of pimeloyl-[acyl-carrier protein] and L-alanine to produce 8-amino-7-oxononanoate (AON), [acyl-carrier protein], and carbon dioxide. This chain is 8-amino-7-oxononanoate synthase, found in Pseudomonas aeruginosa (strain ATCC 15692 / DSM 22644 / CIP 104116 / JCM 14847 / LMG 12228 / 1C / PRS 101 / PAO1).